A 55-amino-acid chain; its full sequence is Large ribosomal subunit protein bL33 (55 aa).

It belongs to the bacterial ribosomal protein bL33 family.

This Xanthomonas axonopodis pv. citri (strain 306) protein is Large ribosomal subunit protein bL33.